Reading from the N-terminus, the 277-residue chain is 4-diphosphocytidyl-2-C-methyl-D-erythritol kinase (277 aa).

Lysine 9 is a catalytic residue. 91-101 (PMGAGLGGGSS) serves as a coordination point for ATP. Residue aspartate 133 is part of the active site.

The protein belongs to the GHMP kinase family. IspE subfamily.

The catalysed reaction is 4-CDP-2-C-methyl-D-erythritol + ATP = 4-CDP-2-C-methyl-D-erythritol 2-phosphate + ADP + H(+). It functions in the pathway isoprenoid biosynthesis; isopentenyl diphosphate biosynthesis via DXP pathway; isopentenyl diphosphate from 1-deoxy-D-xylulose 5-phosphate: step 3/6. Catalyzes the phosphorylation of the position 2 hydroxy group of 4-diphosphocytidyl-2C-methyl-D-erythritol. This chain is 4-diphosphocytidyl-2-C-methyl-D-erythritol kinase, found in Acinetobacter baumannii (strain AB307-0294).